A 615-amino-acid chain; its full sequence is Dihydroxy-acid dehydratase (615 aa).

D81 provides a ligand contact to Mg(2+). C122 is a binding site for [2Fe-2S] cluster. Positions 123 and 124 each coordinate Mg(2+). Position 124 is an N6-carboxylysine (K124). C195 is a [2Fe-2S] cluster binding site. E491 serves as a coordination point for Mg(2+). S517 (proton acceptor) is an active-site residue.

This sequence belongs to the IlvD/Edd family. As to quaternary structure, homodimer. Requires [2Fe-2S] cluster as cofactor. Mg(2+) serves as cofactor.

It catalyses the reaction (2R)-2,3-dihydroxy-3-methylbutanoate = 3-methyl-2-oxobutanoate + H2O. The catalysed reaction is (2R,3R)-2,3-dihydroxy-3-methylpentanoate = (S)-3-methyl-2-oxopentanoate + H2O. It participates in amino-acid biosynthesis; L-isoleucine biosynthesis; L-isoleucine from 2-oxobutanoate: step 3/4. Its pathway is amino-acid biosynthesis; L-valine biosynthesis; L-valine from pyruvate: step 3/4. Functions in the biosynthesis of branched-chain amino acids. Catalyzes the dehydration of (2R,3R)-2,3-dihydroxy-3-methylpentanoate (2,3-dihydroxy-3-methylvalerate) into 2-oxo-3-methylpentanoate (2-oxo-3-methylvalerate) and of (2R)-2,3-dihydroxy-3-methylbutanoate (2,3-dihydroxyisovalerate) into 2-oxo-3-methylbutanoate (2-oxoisovalerate), the penultimate precursor to L-isoleucine and L-valine, respectively. The protein is Dihydroxy-acid dehydratase of Shewanella piezotolerans (strain WP3 / JCM 13877).